A 203-amino-acid polypeptide reads, in one-letter code: V-type ATP synthase subunit D (203 aa).

This sequence belongs to the V-ATPase D subunit family.

Produces ATP from ADP in the presence of a proton gradient across the membrane. The protein is V-type ATP synthase subunit D (atpD) of Chlamydia muridarum (strain MoPn / Nigg).